The following is a 556-amino-acid chain: Potassium-transporting ATPase potassium-binding subunit (556 aa).

Transmembrane regions (helical) follow at residues 6–26 (AGIA…VPLG), 65–85 (SVLA…LVQG), 133–153 (GLAV…IALV), 176–196 (LRIL…GGAI), 249–269 (PTPW…FSLP), 283–303 (VAIA…TMLL), 378–398 (GLYG…LMVG), 415–435 (LAAS…AIAM), 483–503 (ALGL…LALA), and 526–546 (FVGM…LPIL).

The protein belongs to the KdpA family. As to quaternary structure, the system is composed of three essential subunits: KdpA, KdpB and KdpC.

The protein resides in the cell membrane. Functionally, part of the high-affinity ATP-driven potassium transport (or Kdp) system, which catalyzes the hydrolysis of ATP coupled with the electrogenic transport of potassium into the cytoplasm. This subunit binds the extracellular potassium ions and delivers the ions to the membrane domain of KdpB through an intramembrane tunnel. The polypeptide is Potassium-transporting ATPase potassium-binding subunit (Mycolicibacterium smegmatis (strain ATCC 700084 / mc(2)155) (Mycobacterium smegmatis)).